The chain runs to 224 residues: Phosphoribosylformylglycinamidine synthase subunit PurQ (224 aa).

Residues 1-224 form the Glutamine amidotransferase type-1 domain; that stretch reads MIAIIKFPGT…ILLRRLGEWA (224 aa). The active-site Nucleophile is the Cys84. Active-site residues include His196 and Glu198.

Part of the FGAM synthase complex composed of 1 PurL, 1 PurQ and 2 PurS subunits.

It localises to the cytoplasm. The catalysed reaction is N(2)-formyl-N(1)-(5-phospho-beta-D-ribosyl)glycinamide + L-glutamine + ATP + H2O = 2-formamido-N(1)-(5-O-phospho-beta-D-ribosyl)acetamidine + L-glutamate + ADP + phosphate + H(+). It catalyses the reaction L-glutamine + H2O = L-glutamate + NH4(+). Its pathway is purine metabolism; IMP biosynthesis via de novo pathway; 5-amino-1-(5-phospho-D-ribosyl)imidazole from N(2)-formyl-N(1)-(5-phospho-D-ribosyl)glycinamide: step 1/2. In terms of biological role, part of the phosphoribosylformylglycinamidine synthase complex involved in the purines biosynthetic pathway. Catalyzes the ATP-dependent conversion of formylglycinamide ribonucleotide (FGAR) and glutamine to yield formylglycinamidine ribonucleotide (FGAM) and glutamate. The FGAM synthase complex is composed of three subunits. PurQ produces an ammonia molecule by converting glutamine to glutamate. PurL transfers the ammonia molecule to FGAR to form FGAM in an ATP-dependent manner. PurS interacts with PurQ and PurL and is thought to assist in the transfer of the ammonia molecule from PurQ to PurL. This chain is Phosphoribosylformylglycinamidine synthase subunit PurQ, found in Saccharolobus solfataricus (strain ATCC 35092 / DSM 1617 / JCM 11322 / P2) (Sulfolobus solfataricus).